Here is a 343-residue protein sequence, read N- to C-terminus: Protein RecA (343 aa).

An ATP-binding site is contributed by Gly-65 to Thr-72.

It belongs to the RecA family.

The protein localises to the cytoplasm. Its function is as follows. Can catalyze the hydrolysis of ATP in the presence of single-stranded DNA, the ATP-dependent uptake of single-stranded DNA by duplex DNA, and the ATP-dependent hybridization of homologous single-stranded DNAs. It interacts with LexA causing its activation and leading to its autocatalytic cleavage. The protein is Protein RecA of Pseudoalteromonas atlantica (strain T6c / ATCC BAA-1087).